We begin with the raw amino-acid sequence, 313 residues long: tRNA dimethylallyltransferase (313 aa).

10 to 17 is a binding site for ATP; sequence GPTASGKT. A substrate-binding site is contributed by 12-17; that stretch reads TASGKT. 3 interaction with substrate tRNA regions span residues 35-38, 159-163, and 240-245; these read DSAM, QRIQR, and RCVGYR.

Belongs to the IPP transferase family. In terms of assembly, monomer. Mg(2+) serves as cofactor.

It carries out the reaction adenosine(37) in tRNA + dimethylallyl diphosphate = N(6)-dimethylallyladenosine(37) in tRNA + diphosphate. Its function is as follows. Catalyzes the transfer of a dimethylallyl group onto the adenine at position 37 in tRNAs that read codons beginning with uridine, leading to the formation of N6-(dimethylallyl)adenosine (i(6)A). This chain is tRNA dimethylallyltransferase, found in Legionella pneumophila subsp. pneumophila (strain Philadelphia 1 / ATCC 33152 / DSM 7513).